Consider the following 33-residue polypeptide: Cytochrome b6-f complex subunit 7 (33 aa).

Residues 9–29 (AVICFTLTLIGLSLGFVLLKI) traverse the membrane as a helical segment.

The protein belongs to the PetM family. The 4 large subunits of the cytochrome b6-f complex are cytochrome b6, subunit IV (17 kDa polypeptide, PetD), cytochrome f and the Rieske protein, while the 4 small subunits are PetG, PetL, PetM and PetN. The complex functions as a dimer.

It is found in the plastid. Its subcellular location is the cyanelle thylakoid membrane. Its function is as follows. Component of the cytochrome b6-f complex, which mediates electron transfer between photosystem II (PSII) and photosystem I (PSI), cyclic electron flow around PSI, and state transitions. The chain is Cytochrome b6-f complex subunit 7 from Cyanophora paradoxa.